Here is a 150-residue protein sequence, read N- to C-terminus: Avidin-related protein 1 (150 aa).

The first 24 residues, 1 to 24 (MVHATSPLLLLLLLSLALVAPGLS), serve as a signal peptide directing secretion. Positions 26–147 (RKCSLTGKWD…GNNDFTRQRT (122 aa)) constitute an Avidin-like domain. A disulfide bridge links Cys28 with Cys105. Biotin-binding residues include Asn36 and Ser40. The N-linked (GlcNAc...) asparagine glycan is linked to Asn54. Biotin is bound by residues Tyr57, Thr59, and Asp63. 2 N-linked (GlcNAc...) asparagine glycosylation sites follow: Asn67 and Asn93. Biotin contacts are provided by Ser95, Ser99, and Asn140.

The protein belongs to the avidin/streptavidin family. Homotetramer. Post-translationally, glycosylated.

The protein resides in the secreted. Its function is as follows. Forms a strong non-covalent specific complex with biotin. This is Avidin-related protein 1 (AVR1) from Gallus gallus (Chicken).